Here is a 284-residue protein sequence, read N- to C-terminus: 2-dehydro-3-deoxyphosphooctonate aldolase (284 aa).

This sequence belongs to the KdsA family.

It localises to the cytoplasm. It carries out the reaction D-arabinose 5-phosphate + phosphoenolpyruvate + H2O = 3-deoxy-alpha-D-manno-2-octulosonate-8-phosphate + phosphate. The protein operates within carbohydrate biosynthesis; 3-deoxy-D-manno-octulosonate biosynthesis; 3-deoxy-D-manno-octulosonate from D-ribulose 5-phosphate: step 2/3. It functions in the pathway bacterial outer membrane biogenesis; lipopolysaccharide biosynthesis. The chain is 2-dehydro-3-deoxyphosphooctonate aldolase from Salmonella paratyphi A (strain ATCC 9150 / SARB42).